A 365-amino-acid chain; its full sequence is UPF0718 protein MJ0584 (365 aa).

The next 11 helical transmembrane spans lie at 6–26, 32–52, 67–87, 108–128, 130–150, 174–194, 201–221, 245–265, 282–302, 308–328, and 344–364; these read MSFI…YLNV, LLMA…NFII, VAAV…PLFA, AINV…IGFL, AVFA…IFKS, ITFF…PKLF, LYDG…ILAV, IVFP…AIIP, FIAS…VPII, LGMG…LSIP, and TYLG…GIIL.

Belongs to the UPF0718 family.

It localises to the cell membrane. The chain is UPF0718 protein MJ0584 from Methanocaldococcus jannaschii (strain ATCC 43067 / DSM 2661 / JAL-1 / JCM 10045 / NBRC 100440) (Methanococcus jannaschii).